The sequence spans 281 residues: Undecaprenyl-diphosphatase (281 aa).

Helical transmembrane passes span 4–24 (IEIL…WLPI), 45–65 (AFMS…VMVI), 89–109 (WLKV…DDWF), 113–133 (FHNM…FIYL), 152–172 (LPYT…LPGT), 190–210 (SVVT…ASAL), 225–245 (GQLF…MVAI), and 257–277 (FTLF…YSFV).

The protein belongs to the UppP family.

The protein localises to the cell membrane. It catalyses the reaction di-trans,octa-cis-undecaprenyl diphosphate + H2O = di-trans,octa-cis-undecaprenyl phosphate + phosphate + H(+). Its function is as follows. Catalyzes the dephosphorylation of undecaprenyl diphosphate (UPP). Confers resistance to bacitracin. The chain is Undecaprenyl-diphosphatase from Streptococcus pneumoniae (strain Hungary19A-6).